The sequence spans 62 residues: Large ribosomal subunit protein bL28 (62 aa).

It belongs to the bacterial ribosomal protein bL28 family.

The polypeptide is Large ribosomal subunit protein bL28 (Koribacter versatilis (strain Ellin345)).